Here is a 272-residue protein sequence, read N- to C-terminus: 5'-nucleotidase SurE (272 aa).

A divalent metal cation-binding residues include Asp-8, Asp-9, Ser-39, and Asn-96.

This sequence belongs to the SurE nucleotidase family. It depends on a divalent metal cation as a cofactor.

It is found in the cytoplasm. It catalyses the reaction a ribonucleoside 5'-phosphate + H2O = a ribonucleoside + phosphate. In terms of biological role, nucleotidase that shows phosphatase activity on nucleoside 5'-monophosphates. The polypeptide is 5'-nucleotidase SurE (Heliobacterium modesticaldum (strain ATCC 51547 / Ice1)).